The sequence spans 380 residues: uncharacterized protein (380 aa).

2 consecutive HTH tetR-type domains span residues 3 to 63 and 201 to 262; these read ESAE…KEGL and VRTR…CAEI. The H-T-H motif DNA-binding region spans 225-244; that stretch reads TISDITRKSNIRRATFYDHY.

This is an uncharacterized protein from Bacillus subtilis (strain 168).